The primary structure comprises 602 residues: Pentatricopeptide repeat-containing protein At5g11310, mitochondrial (602 aa).

A mitochondrion-targeting transit peptide spans 1 to 35 (MNSLFTAFRRNLLLNPNPHRNFFLHRLLSSSRRSS). 11 PPR repeats span residues 134-165 (SPSLFDSVVNSLCKAREFEIAWSLVFDRVRSD), 172-202 (SADTFIVLIRRYARAGMVQQAIRAFEFARSY), 211-241 (ELRLLEVLLDALCKEGHVREASMYLERIGGT), 249-283 (SVRIFNILLNGWFRSRKLKQAEKLWEEMKAMNVKP), 284-318 (TVVTYGTLIEGYCRMRRVQIAMEVLEEMKMAEMEI), 319-353 (NFMVFNPIIDGLGEAGRLSEALGMMERFFVCESGP), 354-388 (TIVTYNSLVKNFCKAGDLPGASKILKMMMTRGVDP), 389-423 (TTTTYNHFFKYFSKHNKTEEGMNLYFKLIEAGHSP), 424-458 (DRLTYHLILKMLCEDGKLSLAMQVNKEMKNRGIDP), 459-493 (DLLTTTMLIHLLCRLEMLEEAFEEFDNAVRRGIIP), and 494-528 (QYITFKMIDNGLRSKGMSDMAKRLSSLMSSLPHSK).

It belongs to the PPR family. P subfamily.

It is found in the mitochondrion. The chain is Pentatricopeptide repeat-containing protein At5g11310, mitochondrial from Arabidopsis thaliana (Mouse-ear cress).